A 260-amino-acid chain; its full sequence is Ubiquinone/menaquinone biosynthesis C-methyltransferase UbiE (260 aa).

Residues Thr83, Asp104, and 132–133 (NA) each bind S-adenosyl-L-methionine.

This sequence belongs to the class I-like SAM-binding methyltransferase superfamily. MenG/UbiE family.

The enzyme catalyses a 2-demethylmenaquinol + S-adenosyl-L-methionine = a menaquinol + S-adenosyl-L-homocysteine + H(+). It catalyses the reaction a 2-methoxy-6-(all-trans-polyprenyl)benzene-1,4-diol + S-adenosyl-L-methionine = a 5-methoxy-2-methyl-3-(all-trans-polyprenyl)benzene-1,4-diol + S-adenosyl-L-homocysteine + H(+). The protein operates within quinol/quinone metabolism; menaquinone biosynthesis; menaquinol from 1,4-dihydroxy-2-naphthoate: step 2/2. Its pathway is cofactor biosynthesis; ubiquinone biosynthesis. In terms of biological role, methyltransferase required for the conversion of demethylmenaquinol (DMKH2) to menaquinol (MKH2) and the conversion of 2-polyprenyl-6-methoxy-1,4-benzoquinol (DDMQH2) to 2-polyprenyl-3-methyl-6-methoxy-1,4-benzoquinol (DMQH2). This Bartonella henselae (strain ATCC 49882 / DSM 28221 / CCUG 30454 / Houston 1) (Rochalimaea henselae) protein is Ubiquinone/menaquinone biosynthesis C-methyltransferase UbiE.